The chain runs to 264 residues: Small ribosomal subunit protein eS1B (264 aa).

Positions 233–264 (GEGGGSGKPAADETGAKVERADGYEPPVQESV) are disordered. Residues 242 to 255 (AADETGAKVERADG) show a composition bias toward basic and acidic residues.

It belongs to the eukaryotic ribosomal protein eS1 family. In terms of assembly, component of the small ribosomal subunit. Mature ribosomes consist of a small (40S) and a large (60S) subunit. The 40S subunit contains about 33 different proteins and 1 molecule of RNA (18S). The 60S subunit contains about 49 different proteins and 3 molecules of RNA (28S, 5.8S and 5S). Part of the small subunit (SSU) processome, composed of more than 70 proteins and the RNA chaperone small nucleolar RNA (snoRNA) U3.

It localises to the cytoplasm. The protein localises to the nucleus. The protein resides in the nucleolus. In terms of biological role, component of the small ribosomal subunit. The ribosome is a large ribonucleoprotein complex responsible for the synthesis of proteins in the cell. Part of the small subunit (SSU) processome, first precursor of the small eukaryotic ribosomal subunit. During the assembly of the SSU processome in the nucleolus, many ribosome biogenesis factors, an RNA chaperone and ribosomal proteins associate with the nascent pre-rRNA and work in concert to generate RNA folding, modifications, rearrangements and cleavage as well as targeted degradation of pre-ribosomal RNA by the RNA exosome. May play a role during erythropoiesis. The protein is Small ribosomal subunit protein eS1B (rps3a-b) of Xenopus laevis (African clawed frog).